Here is a 416-residue protein sequence, read N- to C-terminus: Glutamyl-tRNA reductase (416 aa).

Substrate is bound by residues 48 to 51 (TCNR), S104, 109 to 111 (EPQ), and Q115. The Nucleophile role is filled by C49. An NADP(+)-binding site is contributed by 184–189 (GAGEMI).

This sequence belongs to the glutamyl-tRNA reductase family. Homodimer.

It catalyses the reaction (S)-4-amino-5-oxopentanoate + tRNA(Glu) + NADP(+) = L-glutamyl-tRNA(Glu) + NADPH + H(+). It functions in the pathway porphyrin-containing compound metabolism; protoporphyrin-IX biosynthesis; 5-aminolevulinate from L-glutamyl-tRNA(Glu): step 1/2. In terms of biological role, catalyzes the NADPH-dependent reduction of glutamyl-tRNA(Glu) to glutamate 1-semialdehyde (GSA). This chain is Glutamyl-tRNA reductase, found in Dechloromonas aromatica (strain RCB).